Reading from the N-terminus, the 270-residue chain is UPF0162 protein VC_2176 (270 aa).

It belongs to the UPF0162 family.

The chain is UPF0162 protein VC_2176 from Vibrio cholerae serotype O1 (strain ATCC 39315 / El Tor Inaba N16961).